The primary structure comprises 227 residues: ATP-dependent dethiobiotin synthetase BioD (227 aa).

An ATP-binding site is contributed by 13 to 18 (DIGKTY). Residue Thr17 participates in Mg(2+) binding. Residue Lys38 is part of the active site. Ser42 is a substrate binding site. ATP-binding positions include Asp55, 116–119 (EGSG), and 179–180 (NN). Residues Asp55 and Glu116 each coordinate Mg(2+).

Belongs to the dethiobiotin synthetase family. In terms of assembly, homodimer. Requires Mg(2+) as cofactor.

It localises to the cytoplasm. It catalyses the reaction (7R,8S)-7,8-diammoniononanoate + CO2 + ATP = (4R,5S)-dethiobiotin + ADP + phosphate + 3 H(+). Its pathway is cofactor biosynthesis; biotin biosynthesis; biotin from 7,8-diaminononanoate: step 1/2. In terms of biological role, catalyzes a mechanistically unusual reaction, the ATP-dependent insertion of CO2 between the N7 and N8 nitrogen atoms of 7,8-diaminopelargonic acid (DAPA, also called 7,8-diammoniononanoate) to form a ureido ring. This is ATP-dependent dethiobiotin synthetase BioD from Clostridium botulinum (strain Langeland / NCTC 10281 / Type F).